Reading from the N-terminus, the 228-residue chain is LexA repressor (228 aa).

Residues phenylalanine 26–threonine 46 constitute a DNA-binding region (H-T-H motif). Catalysis depends on for autocatalytic cleavage activity residues serine 149 and lysine 187.

The protein belongs to the peptidase S24 family. Homodimer.

The catalysed reaction is Hydrolysis of Ala-|-Gly bond in repressor LexA.. Functionally, represses a number of genes involved in the response to DNA damage (SOS response), including recA and lexA. Has been shown to bind to the direct repeat sequence 5'-GTT-N(7)-GTTC-3'. In the presence of single-stranded DNA, RecA interacts with LexA causing an autocatalytic cleavage which disrupts the DNA-binding part of LexA, leading to derepression of the SOS regulon and eventually DNA repair. This Cereibacter sphaeroides (strain ATCC 17023 / DSM 158 / JCM 6121 / CCUG 31486 / LMG 2827 / NBRC 12203 / NCIMB 8253 / ATH 2.4.1.) (Rhodobacter sphaeroides) protein is LexA repressor.